We begin with the raw amino-acid sequence, 477 residues long: Probable cytosolic Fe-S cluster assembly factor GM20417 (477 aa).

8 residues coordinate [4Fe-4S] cluster: Cys23, Cys68, Cys71, Cys74, Cys187, Cys243, Cys395, and Cys399.

Belongs to the NARF family.

Functionally, component of the cytosolic iron-sulfur (Fe/S) protein assembly machinery. Required for maturation of extramitochondrial Fe/S proteins. The chain is Probable cytosolic Fe-S cluster assembly factor GM20417 from Drosophila sechellia (Fruit fly).